The following is a 114-amino-acid chain: T cell receptor alpha variable 10 (114 aa).

An N-terminal signal peptide occupies residues 1–21 (MKKHLTTFLVILWLYFYRGNG). One can recognise an Ig-like domain in the interval 23-114 (NQVEQSPQSL…DSASYICVVS (92 aa)). N-linked (GlcNAc...) asparagine glycosylation is found at Asn-39 and Asn-45. A disulfide bridge connects residues Cys-44 and Cys-111.

Alpha-beta TR is a heterodimer composed of an alpha and beta chain; disulfide-linked. The alpha-beta TR is associated with the transmembrane signaling CD3 coreceptor proteins to form the TR-CD3 (TcR or TCR). The assembly of alpha-beta TR heterodimers with CD3 occurs in the endoplasmic reticulum where a single alpha-beta TR heterodimer associates with one CD3D-CD3E heterodimer, one CD3G-CD3E heterodimer and one CD247 homodimer forming a stable octameric structure. CD3D-CD3E and CD3G-CD3E heterodimers preferentially associate with TR alpha and TR beta chains, respectively. The association of the CD247 homodimer is the last step of TcR assembly in the endoplasmic reticulum and is required for transport to the cell surface.

Its subcellular location is the cell membrane. Functionally, v region of the variable domain of T cell receptor (TR) alpha chain that participates in the antigen recognition. Alpha-beta T cell receptors are antigen specific receptors which are essential to the immune response and are present on the cell surface of T lymphocytes. Recognize peptide-major histocompatibility (MH) (pMH) complexes that are displayed by antigen presenting cells (APC), a prerequisite for efficient T cell adaptive immunity against pathogens. Binding of alpha-beta TR to pMH complex initiates TR-CD3 clustering on the cell surface and intracellular activation of LCK that phosphorylates the ITAM motifs of CD3G, CD3D, CD3E and CD247 enabling the recruitment of ZAP70. In turn ZAP70 phosphorylates LAT, which recruits numerous signaling molecules to form the LAT signalosome. The LAT signalosome propagates signal branching to three major signaling pathways, the calcium, the mitogen-activated protein kinase (MAPK) kinase and the nuclear factor NF-kappa-B (NF-kB) pathways, leading to the mobilization of transcription factors that are critical for gene expression and essential for T cell growth and differentiation. The T cell repertoire is generated in the thymus, by V-(D)-J rearrangement. This repertoire is then shaped by intrathymic selection events to generate a peripheral T cell pool of self-MH restricted, non-autoaggressive T cells. Post-thymic interaction of alpha-beta TR with the pMH complexes shapes TR structural and functional avidity. The sequence is that of T cell receptor alpha variable 10 from Homo sapiens (Human).